A 611-amino-acid chain; its full sequence is Protein spaetzle 3 (611 aa).

The N-terminal stretch at 1-14 (MALTNFSLPFGALG) is a signal peptide. Residue asparagine 5 is glycosylated (N-linked (GlcNAc...) asparagine). The segment at 57 to 322 (EYFKNNPYAP…NDKSNNNQMP (266 aa)) is disordered. 3 stretches are compositionally biased toward low complexity: residues 104–120 (QQVQQTQQQQTQQQHQQ), 127–153 (SVSFQSSSSRSSSSSTTGQSSIQLTQT), and 169–185 (PGQQAQPPQQQQPQQKQ). Positions 191-210 (GSASATFTKNSGSFSITSFG) are enriched in polar residues. A compositionally biased stretch (pro residues) spans 218 to 239 (PPQPQQPPPSQQQQPPPAPPPQ). Residues 288–306 (YDVEEGEEDEEEDGEEEGQ) show a composition bias toward acidic residues. 2 N-linked (GlcNAc...) asparagine glycosylation sites follow: asparagine 335 and asparagine 351. A disordered region spans residues 477-518 (KKRQAAAGGSRNRGGSAGGSGNGNTNANRQPGNKNGSSGTGR). Positions 487-498 (RNRGGSAGGSGN) are enriched in gly residues. Residue asparagine 511 is glycosylated (N-linked (GlcNAc...) asparagine). Residues 521–609 (ACESKIEIVT…LFPSCCVCRC (89 aa)) form the Spaetzle domain. Disulfide bonds link cysteine 522–cysteine 573, cysteine 559–cysteine 605, and cysteine 567–cysteine 607.

Homodimer; disulfide-linked.

Neurotrophin which may function as a ligand to the Toll-related receptor Tollo. Involved in a Tollo and JNK signaling pathway that positively regulates neuromuscular junction (NMJ) growth in presynaptic motorneurons. May function by activating Tollo to promote the phosphorylation of JNK. The chain is Protein spaetzle 3 from Drosophila melanogaster (Fruit fly).